The chain runs to 396 residues: CCA-adding enzyme (396 aa).

ATP is bound by residues G27 and R30. Residues G27 and R30 each coordinate CTP. 2 residues coordinate Mg(2+): D40 and D42. ATP is bound by residues R111, D154, R157, R160, and R163. Residues R111, D154, R157, R160, and R163 each coordinate CTP.

It belongs to the tRNA nucleotidyltransferase/poly(A) polymerase family. Bacterial CCA-adding enzyme type 3 subfamily. Homodimer. Requires Mg(2+) as cofactor.

The catalysed reaction is a tRNA precursor + 2 CTP + ATP = a tRNA with a 3' CCA end + 3 diphosphate. It catalyses the reaction a tRNA with a 3' CCA end + 2 CTP + ATP = a tRNA with a 3' CCACCA end + 3 diphosphate. Functionally, catalyzes the addition and repair of the essential 3'-terminal CCA sequence in tRNAs without using a nucleic acid template. Adds these three nucleotides in the order of C, C, and A to the tRNA nucleotide-73, using CTP and ATP as substrates and producing inorganic pyrophosphate. tRNA 3'-terminal CCA addition is required both for tRNA processing and repair. Also involved in tRNA surveillance by mediating tandem CCA addition to generate a CCACCA at the 3' terminus of unstable tRNAs. While stable tRNAs receive only 3'-terminal CCA, unstable tRNAs are marked with CCACCA and rapidly degraded. This chain is CCA-adding enzyme, found in Bacillus velezensis (strain DSM 23117 / BGSC 10A6 / LMG 26770 / FZB42) (Bacillus amyloliquefaciens subsp. plantarum).